We begin with the raw amino-acid sequence, 154 residues long: Probable chemoreceptor glutamine deamidase CheD (154 aa).

Belongs to the CheD family.

The catalysed reaction is L-glutaminyl-[protein] + H2O = L-glutamyl-[protein] + NH4(+). In terms of biological role, probably deamidates glutamine residues to glutamate on methyl-accepting chemotaxis receptors (MCPs), playing an important role in chemotaxis. The protein is Probable chemoreceptor glutamine deamidase CheD of Methanococcus maripaludis (strain C5 / ATCC BAA-1333).